Reading from the N-terminus, the 1060-residue chain is RNA-binding protein 27 (1060 aa).

Disordered regions lie at residues 80–143, 160–278, and 319–416; these read PLEP…DGKW, YDWR…PKRR, and PPPG…PPPL. 2 stretches are compositionally biased toward basic and acidic residues: residues 84–102 and 124–143; these read VKPE…KEEV and SRSE…DGKW. The segment covering 165 to 185 has biased composition (basic residues); it reads GRSKSRSKSRGLSRSRSRSRG. A compositionally biased stretch (basic and acidic residues) spans 186–211; that stretch reads RSKDRDPNRNVEHRERSKFKSERNDL. Low complexity-rich tracts occupy residues 225 to 235 and 255 to 268; these read SSEQYSSGAQS and SWSN…SSNS. Residues 273–301 form a C3H1-type zinc finger; that stretch reads PPPKRRCRDYDERGFCVLGDLCQFDHGND. Composition is skewed to pro residues over residues 319 to 356 and 371 to 384; these read PPPG…PGPG and QPPP…PRPP. The segment covering 387 to 402 has biased composition (polar residues); the sequence is QSSLINSRDQPGTSAV. Thr447 is subject to Phosphothreonine. Arg455 is modified (omega-N-methylarginine). The segment at 572–594 is disordered; the sequence is LTKKPWLGKQGNNNQSKPGFLRK. One can recognise an RRM domain in the interval 600–674; sequence TKLEVKKIPQ…RFIRVLWHRE (75 aa). The interval 754–775 is disordered; sequence HASTNQSDTSHLLNQTGGSSGE. A compositionally biased stretch (polar residues) spans 755–770; that stretch reads ASTNQSDTSHLLNQTG. Residues 810 to 887 adopt a coiled-coil conformation; it reads VQEVLKKKQE…KDELKTSSTV (78 aa). Position 928 is a phosphoserine (Ser928). The tract at residues 943–982 is disordered; sequence GRGKTISSQGRGRGRGRGRGRGSLNHMVVDHRPKALPGGG. Ser1012 and Ser1020 each carry phosphoserine. The tract at residues 1014–1060 is disordered; the sequence is HKPKVPSISTETEEEEVKEEETETSDLFLHDDDDEDEDEYESRSWRR. Composition is skewed to acidic residues over residues 1024–1037 and 1044–1053; these read ETEE…ETET and DDDDEDEDEY.

The protein localises to the cytoplasm. It is found in the nucleus speckle. Its function is as follows. May be involved in the turnover of nuclear polyadenylated (pA+) RNA. This is RNA-binding protein 27 from Mus musculus (Mouse).